A 396-amino-acid polypeptide reads, in one-letter code: Ribosomal RNA large subunit methyltransferase I (396 aa).

Residues 2 to 81 form the PUA domain; it reads TVRLILAKGR…EVIDCAFFIR (80 aa).

Belongs to the methyltransferase superfamily. RlmI family.

The protein localises to the cytoplasm. It catalyses the reaction cytidine(1962) in 23S rRNA + S-adenosyl-L-methionine = 5-methylcytidine(1962) in 23S rRNA + S-adenosyl-L-homocysteine + H(+). In terms of biological role, specifically methylates the cytosine at position 1962 (m5C1962) of 23S rRNA. The protein is Ribosomal RNA large subunit methyltransferase I of Yersinia pseudotuberculosis serotype O:1b (strain IP 31758).